Consider the following 630-residue polypeptide: MATSNNPRKFSEKIALHNQKQAEETAAFEEVMKDLSLTRAARLQLQKSQYLQLGPSRGQYYGGSLPNVNQIGSSSMDLSFQTPFQSSGLDTSRTTRHHGLVDRVYRERGRLGSPHRRPLSVDKHGRQADSCPYGTVYLSPPADTSWRRTNSDSALHQSTMTPTQAESFTGGPQDAHQKRVLLLTVPGMEETGSETDKTLSKQSWDSKKAGSRPKSCEVPGINIFPSADQENTAALIPATHNTGGSLPDLSTIHFPSPLPTPLDPEEPPFPALTSSGSTGSLAHLGVGGTGQGMNTPSSSPQRRPAVVSPLSLSTEARRQQAQQVPPTLSPLSPITQAVAMDALSLEQQLPYAFFTQAGSQQPPPQPQPPPPPPPVSQQQPPPPQVSVGLPQGGPLLPSASLTRGPQLPPLAVTVPSTLPQSPTESPGQPPMGIDVTSAPALQYRTGAGSPATQSPTSPVSNQGFSPGSSPQHTSTLGSVFGDAYYEQQMTARQANALSRQLEQFNMMENAISSSSLYNPGSTLNYSQAAMMGLSGSHGGLQDPQQLGYAGHGGIPNIILTVTGESPPSLSKELSSTLAGVSDVSFDSDHQFPLDELKIDPLTLDGLHMLNDPDMVLADPATEDTFRMDRL.

Residues serine 64 and serine 113 each carry the phosphoserine modification. 4 disordered regions span residues 142–174 (ADTS…GPQD), 187–221 (GMEE…VPGI), 256–331 (SPLP…LSPL), and 356–475 (QAGS…HTST). Residue threonine 149 is modified to Phosphothreonine. At serine 151 the chain carries Phosphoserine; by SIK1 and SIK2. Over residues 151-167 (SDSALHQSTMTPTQAES) the composition is skewed to polar residues. At threonine 161 the chain carries Phosphothreonine. Over residues 194-208 (ETDKTLSKQSWDSKK) the composition is skewed to basic and acidic residues. Residues 242 to 258 (TGGSLPDLSTIHFPSPL) carry the Nuclear export signal motif. Positions 256 to 270 (SPLPTPLDPEEPPFP) are enriched in pro residues. Composition is skewed to polar residues over residues 292 to 301 (GMNTPSSSPQ) and 310 to 331 (LSLS…LSPL). Over residues 361-384 (QPPPQPQPPPPPPPVSQQQPPPPQ) the composition is skewed to pro residues. Over residues 385–394 (VSVGLPQGGP) the composition is skewed to low complexity. 2 stretches are compositionally biased toward polar residues: residues 414-426 (VPST…TESP) and 450-475 (PATQ…HTST).

Belongs to the TORC family. As to quaternary structure, binds, as a tetramer, through its N-terminal region, with the bZIP domain of CREB1. 'Arg-314' in the bZIP domain of CREB1 is essential for this interaction. Interaction, via its C-terminal, with TAF4, enhances recruitment of TAF4 to CREB1. Interacts with 14-3-3 proteins, including YWHAE/14-3-3 epsilon. Interacts with calmodulin-dependent catalytic subunit PPP3CA/calcineurin A. In terms of processing, phosphorylation/dephosphorylation states of Ser-151 are required for regulating transduction of CREB activity. TORCs are inactive when phosphorylated, and active when dephosphorylated at this site. This primary site of phosphorylation is mediated by SIKs (SIK1 and SIK2), is regulated by cAMP and calcium levels and is dependent on the phosphorylation of SIKs by LKB1. As to expression, highly expressed in developing cortical neurons, peaking during dendrite development.

It is found in the cytoplasm. Its subcellular location is the nucleus. Functionally, transcriptional coactivator for CREB1 which activates transcription through both consensus and variant cAMP response element (CRE) sites. Acts as a coactivator, in the SIK/TORC signaling pathway, being active when dephosphorylated and acts independently of CREB1 'Ser-133' phosphorylation. Enhances the interaction of CREB1 with TAF4. Regulates the expression of specific CREB-activated genes such as the steroidogenic gene, StAR. Potent coactivator of PGC1alpha and inducer of mitochondrial biogenesis in muscle cells. In the hippocampus, involved in late-phase long-term potentiation (L-LTP) maintenance at the Schaffer collateral-CA1 synapses. May be required for dendritic growth of developing cortical neurons. In concert with SIK1, regulates the light-induced entrainment of the circadian clock. In response to light stimulus, coactivates the CREB-mediated transcription of PER1 which plays an important role in the photic entrainment of the circadian clock. The sequence is that of CREB-regulated transcription coactivator 1 (Crtc1) from Rattus norvegicus (Rat).